We begin with the raw amino-acid sequence, 542 residues long: Protein MPA43 (542 aa).

This Saccharomyces cerevisiae (strain ATCC 204508 / S288c) (Baker's yeast) protein is Protein MPA43 (MPA43).